Here is a 360-residue protein sequence, read N- to C-terminus: MEAKNNRILKDKTFDKSRWIQMPRDVIAGHDALLQLPNVITDLGVTGPLLLLSGKTTLQTVGLEVLRLLEDRQVTSAVVGEITYEEIARVEDLAQNIGAVLIIAVGGGRVIDTAKVVSYNLDIQFISVPTAASHDGIASSRASIMTADGNVSVAAHPPLAIVADTGIIAGAPHRLMAAGYADMVANYTAVMDWDLSKSKTGEQVSEYAMTLSMITAELMVENAEKIKAFDENAAWIVVKALFASGVAMSIAGSSRPASGGEHKFAHMLERLVPGKVLHGEACGVGTIISMIMHEGDWKKIRNSLRLIGAPTTPKDLGISDEIVIEAILRAKEIRPERYTIFDEDITREQAECLVARLYEE.

Residues 108–112 and 130–133 each bind NAD(+); these read GRVID and TAAS. D135 contacts substrate. Residue S139 coordinates NAD(+). Position 182 (D182) interacts with substrate. Zn(2+) is bound by residues D182 and H262. H266 provides a ligand contact to substrate. Position 278 (H278) interacts with Zn(2+).

It belongs to the glycerol-1-phosphate dehydrogenase family. It depends on Zn(2+) as a cofactor.

It is found in the cytoplasm. It carries out the reaction sn-glycerol 1-phosphate + NAD(+) = dihydroxyacetone phosphate + NADH + H(+). It catalyses the reaction sn-glycerol 1-phosphate + NADP(+) = dihydroxyacetone phosphate + NADPH + H(+). The protein operates within membrane lipid metabolism; glycerophospholipid metabolism. Functionally, catalyzes the NAD(P)H-dependent reduction of dihydroxyacetonephosphate (DHAP or glycerone phosphate) to glycerol 1-phosphate (G1P). The G1P thus generated is used as the glycerophosphate backbone of phospholipids in the cellular membranes of Archaea. The sequence is that of Glycerol-1-phosphate dehydrogenase [NAD(P)+] from Methanocorpusculum labreanum (strain ATCC 43576 / DSM 4855 / Z).